A 742-amino-acid chain; its full sequence is MGVRKQTMVKDTAVPIENKKFTREKKDKEKDKKPDRERAGRKTGFFVPKKVETGKKGKLGRKSEGKAEEKAEGKAGISTSTISERAVLKPSAGKRKKAESGPGTKTGKKEKKQKKSFSSSLPASKFLPMSPEEVKARGWKELDIILVTGDAYVDHSSFGTAIIGRVLEDAGFRVGIIAQPRWDNPEDLKKLGRPRLFFSVSAGNTDSMVSNLTPGLKPRKKDAYSPGNKTGLRPNRSVIIYSNRIKEAFPNVPIVLGGIEASLRRFAHYDYLSDKVRQAILADAPADLVVYGMGELQIVEIAKRLQAGEDIRKIRDIPGTVWKMEVRAWKELKEKGKGTNEAVARDTAPEAAEFFKEYIEIPSFSEVSQDKAAFAKAFRTYFLEQNPITGKGIVQPHPKTVIVQNRPMRPLTEAELDHVYELPYTGEAHPSYTEPIPALEMVKFSLTTHRGCFGGCSFCAITQHQGRMITSRSIESVLREAKKLTEKPDFKGIINGVGGPTANMYGMGCRSWEKQGACLDKACLYPRVCPALDTSHKKLLELMKRLRELPGVKHVFTGYGVRYDLALEDEEYLEELCTHHISGQLRIAPEHFSKRVTDAMSKPGKKVYERFSEKFAAFNKKCGKEQYIVNYLMSGHPGCTLKDMIEMAEYLRDHGGYTEQVQDFTPTPMTVSTCMYYTGLDPFTGKKVYVAKDKKEKAMQRALMHYRSPANYELVYEALEKAGRLDLVGNAHKCLIRRKEKQ.

The tract at residues 1 to 125 (MGVRKQTMVK…SFSSSLPASK (125 aa)) is disordered. Residues 1-128 (MGVRKQTMVK…SSLPASKFLP (128 aa)) are unknown. Composition is skewed to basic and acidic residues over residues 17-40 (ENKK…ERAG) and 49-73 (KKVE…KAEG). Over residues 106–115 (TGKKEKKQKK) the composition is skewed to basic residues. The tract at residues 129 to 742 (MSPEEVKARG…KCLIRRKEKQ (614 aa)) is UPF0313. The Radical SAM core domain maps to 438 to 707 (ALEMVKFSLT…AMQRALMHYR (270 aa)). Residues Cys452, Cys456, and Cys459 each coordinate [4Fe-4S] cluster.

The protein in the C-terminal section; belongs to the UPF0313 family. Requires [4Fe-4S] cluster as cofactor.

The polypeptide is UPF0313 protein MA_4618 (Methanosarcina acetivorans (strain ATCC 35395 / DSM 2834 / JCM 12185 / C2A)).